The sequence spans 450 residues: Tubulin alpha-2 chain (450 aa).

Residue glutamine 11 coordinates GTP. Position 40 is an N6-acetyllysine (lysine 40). Residues glutamate 71, glycine 144, threonine 145, threonine 179, asparagine 206, and asparagine 228 each coordinate GTP. Mg(2+) is bound at residue glutamate 71. Glutamate 254 is an active-site residue.

This sequence belongs to the tubulin family. Dimer of alpha and beta chains. A typical microtubule is a hollow water-filled tube with an outer diameter of 25 nm and an inner diameter of 15 nM. Alpha-beta heterodimers associate head-to-tail to form protofilaments running lengthwise along the microtubule wall with the beta-tubulin subunit facing the microtubule plus end conferring a structural polarity. Microtubules usually have 13 protofilaments but different protofilament numbers can be found in some organisms and specialized cells. Mg(2+) is required as a cofactor. Undergoes a tyrosination/detyrosination cycle, the cyclic removal and re-addition of a C-terminal tyrosine residue by the enzymes tubulin tyrosine carboxypeptidase (TTCP) and tubulin tyrosine ligase (TTL), respectively. Post-translationally, acetylation of alpha chains at Lys-40 stabilizes microtubules and affects affinity and processivity of microtubule motors. This modification has a role in multiple cellular functions, ranging from cell motility, cell cycle progression or cell differentiation to intracellular trafficking and signaling.

It is found in the cytoplasm. The protein resides in the cytoskeleton. The enzyme catalyses GTP + H2O = GDP + phosphate + H(+). Functionally, tubulin is the major constituent of microtubules, a cylinder consisting of laterally associated linear protofilaments composed of alpha- and beta-tubulin heterodimers. Microtubules grow by the addition of GTP-tubulin dimers to the microtubule end, where a stabilizing cap forms. Below the cap, tubulin dimers are in GDP-bound state, owing to GTPase activity of alpha-tubulin. This chain is Tubulin alpha-2 chain, found in Gossypium hirsutum (Upland cotton).